Consider the following 246-residue polypeptide: TLC domain-containing protein 2 (246 aa).

Helical transmembrane passes span 5–25, 43–63, 79–99, 107–127, 128–148, and 199–219; these read SVIL…YGLG, ISTS…CFCM, SHAL…DMVI, WELL…VLTC, RYVG…FLHL, and FSYT…IVLF. A TLC domain is found at 35 to 231; that stretch reads RNAWKWNNIS…LMRSDFMKAS (197 aa).

This sequence belongs to the TLCD family.

The protein localises to the cell membrane. In terms of biological role, regulates the composition and fluidity of the plasma membrane. Inhibits the incorporation of membrane-fluidizing phospholipids containing omega-3 long-chain polyunsaturated fatty acids (LCPUFA) and thereby promotes membrane rigidity. Does not appear to have any effect on LCPUFA synthesis. This Danio rerio (Zebrafish) protein is TLC domain-containing protein 2 (tlcd2).